A 102-amino-acid polypeptide reads, in one-letter code: Small ribosomal subunit protein uS10 (102 aa).

The protein belongs to the universal ribosomal protein uS10 family. In terms of assembly, part of the 30S ribosomal subunit.

Its function is as follows. Involved in the binding of tRNA to the ribosomes. The polypeptide is Small ribosomal subunit protein uS10 (Methanosphaerula palustris (strain ATCC BAA-1556 / DSM 19958 / E1-9c)).